Here is a 152-residue protein sequence, read N- to C-terminus: UPF0266 membrane protein YobD (152 aa).

Helical transmembrane passes span 6–26 (LVLI…QFIM), 45–65 (VDSV…VTSH), and 67–87 (AQMT…IFWI).

The protein belongs to the UPF0266 family.

The protein localises to the cell inner membrane. This is UPF0266 membrane protein YobD from Salmonella paratyphi A (strain ATCC 9150 / SARB42).